Reading from the N-terminus, the 365-residue chain is 3-dehydroquinate synthase (365 aa).

Residues 69 to 74 (DGEAHK), 103 to 107 (GVIGD), 127 to 128 (TT), Lys140, Lys149, and 167 to 170 (TLNT) each bind NAD(+). Zn(2+) contacts are provided by Glu182, His245, and His262.

The protein belongs to the sugar phosphate cyclases superfamily. Dehydroquinate synthase family. The cofactor is Co(2+). Zn(2+) is required as a cofactor. Requires NAD(+) as cofactor.

It localises to the cytoplasm. The enzyme catalyses 7-phospho-2-dehydro-3-deoxy-D-arabino-heptonate = 3-dehydroquinate + phosphate. It participates in metabolic intermediate biosynthesis; chorismate biosynthesis; chorismate from D-erythrose 4-phosphate and phosphoenolpyruvate: step 2/7. Catalyzes the conversion of 3-deoxy-D-arabino-heptulosonate 7-phosphate (DAHP) to dehydroquinate (DHQ). In Pseudomonas putida (strain W619), this protein is 3-dehydroquinate synthase.